An 89-amino-acid chain; its full sequence is Small ribosomal subunit protein uS15 (89 aa).

This sequence belongs to the universal ribosomal protein uS15 family. As to quaternary structure, part of the 30S ribosomal subunit. Forms a bridge to the 50S subunit in the 70S ribosome, contacting the 23S rRNA.

Functionally, one of the primary rRNA binding proteins, it binds directly to 16S rRNA where it helps nucleate assembly of the platform of the 30S subunit by binding and bridging several RNA helices of the 16S rRNA. In terms of biological role, forms an intersubunit bridge (bridge B4) with the 23S rRNA of the 50S subunit in the ribosome. In Bradyrhizobium sp. (strain BTAi1 / ATCC BAA-1182), this protein is Small ribosomal subunit protein uS15.